The sequence spans 401 residues: Acetate kinase (401 aa).

Asparagine 7 contributes to the Mg(2+) binding site. An ATP-binding site is contributed by lysine 14. Arginine 90 contacts substrate. Residue aspartate 147 is the Proton donor/acceptor of the active site. ATP contacts are provided by residues 207-211, 282-284, and 330-334; these read HLGNG, DFR, and GVGEN. Glutamate 383 is a Mg(2+) binding site.

This sequence belongs to the acetokinase family. As to quaternary structure, homodimer. Mg(2+) serves as cofactor. It depends on Mn(2+) as a cofactor.

Its subcellular location is the cytoplasm. The enzyme catalyses acetate + ATP = acetyl phosphate + ADP. Its pathway is metabolic intermediate biosynthesis; acetyl-CoA biosynthesis; acetyl-CoA from acetate: step 1/2. Its function is as follows. Catalyzes the formation of acetyl phosphate from acetate and ATP. Can also catalyze the reverse reaction. The sequence is that of Acetate kinase from Clostridium novyi (strain NT).